Consider the following 133-residue polypeptide: Fluoride-specific ion channel FluC (133 aa).

Helical transmembrane passes span 12–32, 41–61, 76–96, and 104–124; these read LAMT…ASLI, WGTL…LVWL, IVGV…CLVF, and MIGI…FAGA. 2 residues coordinate Na(+): Gly81 and Thr84.

The protein belongs to the fluoride channel Fluc/FEX (TC 1.A.43) family.

The protein resides in the cell inner membrane. It catalyses the reaction fluoride(in) = fluoride(out). With respect to regulation, na(+) is not transported, but it plays an essential structural role and its presence is essential for fluoride channel function. Its function is as follows. Fluoride-specific ion channel. Important for reducing fluoride concentration in the cell, thus reducing its toxicity. In Xanthomonas axonopodis pv. citri (strain 306), this protein is Fluoride-specific ion channel FluC.